A 490-amino-acid chain; its full sequence is 7-ethoxycoumarin O-deethylase (490 aa).

Cys-432 lines the heme pocket.

It belongs to the cytochrome P450 family. The cofactor is heme.

Functionally, capable of dealkylating a model xenobiotic compound, 7-ethoxycoumarin. Metabolizes with high efficiency a wide range of xenobiotics, including alkoxycoumarins, alkoxyresorufins, and several herbicides of the class of phenylureas. Catalyzes the double N-dealkylation (oxidative N-demethylation) of phenylureas such as chlortoluron and isoproturon with turnover rates comparable to those reported for physiological substrates and produces non-phytotoxic compounds. Could be used for control of herbicide tolerance and selectivity, as well as soil and groundwater bioremediation. This is 7-ethoxycoumarin O-deethylase (CYP76B1) from Helianthus tuberosus (Jerusalem artichoke).